Consider the following 82-residue polypeptide: UPF0213 protein SSP2268 (82 aa).

Positions 2–77 (DKHYIYIVKC…KTFSRQKKLK (76 aa)) constitute a GIY-YIG domain.

It belongs to the UPF0213 family.

The protein is UPF0213 protein SSP2268 of Staphylococcus saprophyticus subsp. saprophyticus (strain ATCC 15305 / DSM 20229 / NCIMB 8711 / NCTC 7292 / S-41).